The primary structure comprises 284 residues: 4-diphosphocytidyl-2-C-methyl-D-erythritol kinase (284 aa).

K10 is a catalytic residue. An ATP-binding site is contributed by 92 to 102 (PYGAGLGSGSS). The active site involves D134.

The protein belongs to the GHMP kinase family. IspE subfamily.

It catalyses the reaction 4-CDP-2-C-methyl-D-erythritol + ATP = 4-CDP-2-C-methyl-D-erythritol 2-phosphate + ADP + H(+). It participates in isoprenoid biosynthesis; isopentenyl diphosphate biosynthesis via DXP pathway; isopentenyl diphosphate from 1-deoxy-D-xylulose 5-phosphate: step 3/6. Functionally, catalyzes the phosphorylation of the position 2 hydroxy group of 4-diphosphocytidyl-2C-methyl-D-erythritol. This is 4-diphosphocytidyl-2-C-methyl-D-erythritol kinase from Salinibacter ruber (strain DSM 13855 / M31).